The primary structure comprises 117 residues: Large ribosomal subunit protein bL19 (117 aa).

Belongs to the bacterial ribosomal protein bL19 family.

Its function is as follows. This protein is located at the 30S-50S ribosomal subunit interface and may play a role in the structure and function of the aminoacyl-tRNA binding site. In Halorhodospira halophila (strain DSM 244 / SL1) (Ectothiorhodospira halophila (strain DSM 244 / SL1)), this protein is Large ribosomal subunit protein bL19.